The sequence spans 166 residues: 6,7-dimethyl-8-ribityllumazine synthase (166 aa).

5-amino-6-(D-ribitylamino)uracil-binding positions include phenylalanine 22, serine 56–glutamate 58, and alanine 80–isoleucine 82. (2S)-2-hydroxy-3-oxobutyl phosphate is bound at residue glutamate 85–threonine 86. Histidine 88 (proton donor) is an active-site residue. Phenylalanine 113 serves as a coordination point for 5-amino-6-(D-ribitylamino)uracil. Arginine 127 contributes to the (2S)-2-hydroxy-3-oxobutyl phosphate binding site.

The protein belongs to the DMRL synthase family.

The enzyme catalyses (2S)-2-hydroxy-3-oxobutyl phosphate + 5-amino-6-(D-ribitylamino)uracil = 6,7-dimethyl-8-(1-D-ribityl)lumazine + phosphate + 2 H2O + H(+). It functions in the pathway cofactor biosynthesis; riboflavin biosynthesis; riboflavin from 2-hydroxy-3-oxobutyl phosphate and 5-amino-6-(D-ribitylamino)uracil: step 1/2. Catalyzes the formation of 6,7-dimethyl-8-ribityllumazine by condensation of 5-amino-6-(D-ribitylamino)uracil with 3,4-dihydroxy-2-butanone 4-phosphate. This is the penultimate step in the biosynthesis of riboflavin. In Thermotoga neapolitana (strain ATCC 49049 / DSM 4359 / NBRC 107923 / NS-E), this protein is 6,7-dimethyl-8-ribityllumazine synthase.